A 339-amino-acid polypeptide reads, in one-letter code: MTHGEPQEFSFDVEENHGHVPVLRARMAELIAPKVTAMGSDAVIIDGTLGAGGHSKYFLESFPEARVIGLDRDTNSLASARERLKEFGDRFLGIHTRFDRFAPKLEELAQSGNPIAATALEQGISGALFDLGVSSMQLDQAERGFAYRVDAPLDMRMDNTIGITAADVLNTYSHGELARILKTYGDERFAGKIASAIVREREKEPFDTSARLVELLYATIPAATRRTGGHPAKRTFQALRIEVNRELESLENVLPEITQRLTTGGRAVFMSYQSLEDKIVKRYFVDISTSKTPPGLPMELPEYAPKFKVVTRGAEKATDAEIEENPRAASVRVRAIEAL.

S-adenosyl-L-methionine is bound by residues 52–54, Asp71, Phe98, Asp130, and Gln137; that span reads GGH.

Belongs to the methyltransferase superfamily. RsmH family.

Its subcellular location is the cytoplasm. The catalysed reaction is cytidine(1402) in 16S rRNA + S-adenosyl-L-methionine = N(4)-methylcytidine(1402) in 16S rRNA + S-adenosyl-L-homocysteine + H(+). Specifically methylates the N4 position of cytidine in position 1402 (C1402) of 16S rRNA. The sequence is that of Ribosomal RNA small subunit methyltransferase H from Corynebacterium diphtheriae (strain ATCC 700971 / NCTC 13129 / Biotype gravis).